A 131-amino-acid chain; its full sequence is Small ribosomal subunit protein eS8 (131 aa).

The interval 11 to 36 (DLKKPSGGKKGRVRKTKKKALCGGPP) is disordered. The span at 16–30 (SGGKKGRVRKTKKKA) shows a compositional bias: basic residues.

The protein belongs to the eukaryotic ribosomal protein eS8 family. As to quaternary structure, part of the 30S ribosomal subunit.

The sequence is that of Small ribosomal subunit protein eS8 from Pyrobaculum islandicum (strain DSM 4184 / JCM 9189 / GEO3).